A 465-amino-acid polypeptide reads, in one-letter code: FAD-dependent monooxygenase olcE (465 aa).

A helical transmembrane segment spans residues 9-29 (IIIGGSVAGLTLALSLNKIGI). Positions 35, 49, 108, 308, and 321 each coordinate FAD.

It belongs to the paxM FAD-dependent monooxygenase family. Requires FAD as cofactor.

Its subcellular location is the membrane. It functions in the pathway secondary metabolite biosynthesis; terpenoid biosynthesis. Functionally, FAD-dependent monooxygenase; part of the gene cluster that mediates the biosynthesis of 15-deoxyoxalicine B. The first step of the pathway is the synthesis of nicotinyl-CoA from nicotinic acid by the nicotinic acid-CoA ligase olcI. Nicotinyl-CoA is then a substrate of polyketide synthase olcA to produce 4-hydroxy-6-(3-pyridinyl)-2H-pyran-2-one (HPPO) which is further prenylated by the polyprenyl transferase olcH to yield geranylgeranyl-HPPO. Geranylgeranyl pyrophosphate is provided by the cluster-specific geranylgeranyl pyrophosphate synthase olcC. The FAD-dependent monooxygenase olcE catalyzes the epoxidation of geranylgeranyl-HPPO and the terpene cyclase olcD catalyzes the cyclization of the terpenoid component, resulting in the formation of the tricyclic terpene moiety seen in predecaturin E. The cytochrome P450 monooxygenase then catalyzes the allylic oxidation of predecaturin E, which is followed by spirocylization with concomitant loss of one molecule of water to form decaturin E. Decaturin E is the substrate of the cytochrome P450 monooxygenase olcJ which hydroxylates it at the C-29 position to form decaturin F. The short-chain dehydrogenase/reductase olcF may catalyze the oxidation of decaturin F to generate the 29-hydroxyl-27-one intermediate, and subsequent hemiacetal formation probably leads to the formation of decaturin C. The dioxygenase olcK may be a peroxisomal enzyme that catalyzes the hydroxylation of decaturin C into decaturin A once decaturin C is shuttled into the peroxisome by the MFS transporter olcL. Finally the cytochrome P450 monooxygenase olcB catalyzes the oxidative rearrangement to yield 15-deoxyoxalicine B. In the absence of olcJ, decaturin E may be shunted to a pathway in which it is oxidized to a ketone, possibly by olcF, to form decaturin D, which undergoes further allylic oxidation to yield decaturin G. Moreover, in the absence of oclK or oclL, oclB can convert decaturin C into 15-deoxyoxalicine A. This is FAD-dependent monooxygenase olcE from Penicillium canescens.